The primary structure comprises 421 residues: Glucose-1-phosphate adenylyltransferase (421 aa).

Alpha-D-glucose 1-phosphate is bound by residues Tyr109, Gly175, Glu190–Lys191, and Ser208.

Belongs to the bacterial/plant glucose-1-phosphate adenylyltransferase family. Homotetramer.

It catalyses the reaction alpha-D-glucose 1-phosphate + ATP + H(+) = ADP-alpha-D-glucose + diphosphate. It participates in glycan biosynthesis; glycogen biosynthesis. In terms of biological role, involved in the biosynthesis of ADP-glucose, a building block required for the elongation reactions to produce glycogen. Catalyzes the reaction between ATP and alpha-D-glucose 1-phosphate (G1P) to produce pyrophosphate and ADP-Glc. This is Glucose-1-phosphate adenylyltransferase from Teredinibacter turnerae (strain ATCC 39867 / T7901).